The sequence spans 365 residues: Peptide chain release factor 2 (365 aa).

Gln252 is modified (N5-methylglutamine).

Belongs to the prokaryotic/mitochondrial release factor family. Post-translationally, methylated by PrmC. Methylation increases the termination efficiency of RF2.

It localises to the cytoplasm. Peptide chain release factor 2 directs the termination of translation in response to the peptide chain termination codons UGA and UAA. The chain is Peptide chain release factor 2 from Aeromonas hydrophila subsp. hydrophila (strain ATCC 7966 / DSM 30187 / BCRC 13018 / CCUG 14551 / JCM 1027 / KCTC 2358 / NCIMB 9240 / NCTC 8049).